Reading from the N-terminus, the 425-residue chain is Amidase 1 (425 aa).

Ala-2 carries the N-acetylalanine modification. Residues Lys-36 and Ser-113 each act as charge relay system in the active site. Catalysis depends on Ser-137, which acts as the Acyl-ester intermediate.

Belongs to the amidase family. In terms of tissue distribution, expressed in cotyledons, leaves and flower buds. Lower levels in roots, stems and siliques.

Its subcellular location is the cytoplasm. It is found in the nucleus. It localises to the nucleoplasm. The catalysed reaction is a monocarboxylic acid amide + H2O = a monocarboxylate + NH4(+). It catalyses the reaction indole-3-acetamide + H2O = (indol-3-yl)acetate + NH4(+). It carries out the reaction 2-phenylacetamide + H2O = 2-phenylacetate + NH4(+). The enzyme catalyses L-asparagine + H2O = L-aspartate + NH4(+). The catalysed reaction is 1-naphthaleneacetamide + H2O = 1-naphthaleneacetate + NH4(+). With respect to regulation, inhibited by phenylmethylsulfonyl fluoride (PMSF). Functionally, amidase involved in auxin biosynthesis. Converts indole-3-acetamide to indole-3-acetate. Converts phenyl-2-acetamide (PAM) to phenyl-2-acetate. Substrate preference is PAM &gt; IAM. Can also use L-asparagine and 1-naphtalene-acetamide as substrates, but not indole-3-acetonitrile or indole-3-acetyl-L-aspartic acid. This is Amidase 1 from Arabidopsis thaliana (Mouse-ear cress).